The sequence spans 422 residues: Serine--tRNA ligase (422 aa).

229–231 is a binding site for L-serine; it reads TAE. Residue 260-262 coordinates ATP; it reads RAE. Glu283 serves as a coordination point for L-serine. Position 347-350 (347-350) interacts with ATP; that stretch reads EISS. An L-serine-binding site is contributed by Ser383.

It belongs to the class-II aminoacyl-tRNA synthetase family. Type-1 seryl-tRNA synthetase subfamily. Homodimer. The tRNA molecule binds across the dimer.

It localises to the cytoplasm. The enzyme catalyses tRNA(Ser) + L-serine + ATP = L-seryl-tRNA(Ser) + AMP + diphosphate + H(+). The catalysed reaction is tRNA(Sec) + L-serine + ATP = L-seryl-tRNA(Sec) + AMP + diphosphate + H(+). Its pathway is aminoacyl-tRNA biosynthesis; selenocysteinyl-tRNA(Sec) biosynthesis; L-seryl-tRNA(Sec) from L-serine and tRNA(Sec): step 1/1. Functionally, catalyzes the attachment of serine to tRNA(Ser). Is also able to aminoacylate tRNA(Sec) with serine, to form the misacylated tRNA L-seryl-tRNA(Sec), which will be further converted into selenocysteinyl-tRNA(Sec). The protein is Serine--tRNA ligase of Heliobacterium modesticaldum (strain ATCC 51547 / Ice1).